The sequence spans 136 residues: Large ribosomal subunit protein uL16c (136 aa).

This sequence belongs to the universal ribosomal protein uL16 family. In terms of assembly, part of the 50S ribosomal subunit.

Its subcellular location is the plastid. It is found in the chloroplast. The protein is Large ribosomal subunit protein uL16c of Chlamydomonas reinhardtii (Chlamydomonas smithii).